A 267-amino-acid polypeptide reads, in one-letter code: Putative ABC transporter permease protein MJ0413 (267 aa).

Helical transmembrane passes span 18 to 38 (VLKISLPALAVVIWELLAIYI), 48 to 68 (EAVINVLIHPFQGILGTGSLI), 78 to 98 (VISGFLLASAVAIPLGILMGY), 115 to 135 (PIPPLAWVPLSLAWFGLGEMS), 136 to 156 (MIFIIFIGAFFPILINTISGV), 188 to 208 (PSILTGLRVGAGIAWMCVVAA), and 228 to 248 (LSRMDVVIACMIIIGLIGLVL). Residues 71 to 252 (TIISIKRVIS…LIGLVLDRGL (182 aa)) enclose the ABC transmembrane type-1 domain.

Belongs to the binding-protein-dependent transport system permease family. CysTW subfamily.

It localises to the cell membrane. Functionally, probably part of a binding-protein-dependent transport system. Probably responsible for the translocation of the substrate across the membrane. This is Putative ABC transporter permease protein MJ0413 from Methanocaldococcus jannaschii (strain ATCC 43067 / DSM 2661 / JAL-1 / JCM 10045 / NBRC 100440) (Methanococcus jannaschii).